The following is a 175-amino-acid chain: MSPCAVVVGPPGAGKTTVGRLLAERLGVAFRDTDDDVVRVAGKPIAEIFTGDGEPVFRAMEERAVAAALAEHDGVLSLGGGSVLSERTRALLAEQPVVFLSVGLAEGARRTGLSTARPLLAGVNPRATFKALLDARLPLYREVATWELATDGVEPDALVDRIVERVTADRAAGRE.

12–17 (GAGKTT) serves as a coordination point for ATP. Thr-16 contacts Mg(2+). 3 residues coordinate substrate: Asp-34, Arg-58, and Gly-80. Arg-117 is a binding site for ATP. Arg-136 contacts substrate.

Belongs to the shikimate kinase family. As to quaternary structure, monomer. The cofactor is Mg(2+).

It localises to the cytoplasm. The enzyme catalyses shikimate + ATP = 3-phosphoshikimate + ADP + H(+). Its pathway is metabolic intermediate biosynthesis; chorismate biosynthesis; chorismate from D-erythrose 4-phosphate and phosphoenolpyruvate: step 5/7. Catalyzes the specific phosphorylation of the 3-hydroxyl group of shikimic acid using ATP as a cosubstrate. The polypeptide is Shikimate kinase (Saccharopolyspora erythraea (strain ATCC 11635 / DSM 40517 / JCM 4748 / NBRC 13426 / NCIMB 8594 / NRRL 2338)).